The sequence spans 59 residues: Small, acid-soluble spore protein H 2 (59 aa).

It belongs to the SspH family.

It localises to the spore core. The chain is Small, acid-soluble spore protein H 2 from Bacillus cytotoxicus (strain DSM 22905 / CIP 110041 / 391-98 / NVH 391-98).